The primary structure comprises 283 residues: tRNA-cytidine(32) 2-sulfurtransferase (283 aa).

The PP-loop motif signature appears at 49–54 (SGGKDS). [4Fe-4S] cluster is bound by residues Cys-124, Cys-127, and Cys-215.

It belongs to the TtcA family. As to quaternary structure, homodimer. It depends on Mg(2+) as a cofactor. [4Fe-4S] cluster serves as cofactor.

Its subcellular location is the cytoplasm. It catalyses the reaction cytidine(32) in tRNA + S-sulfanyl-L-cysteinyl-[cysteine desulfurase] + AH2 + ATP = 2-thiocytidine(32) in tRNA + L-cysteinyl-[cysteine desulfurase] + A + AMP + diphosphate + H(+). It functions in the pathway tRNA modification. Functionally, catalyzes the ATP-dependent 2-thiolation of cytidine in position 32 of tRNA, to form 2-thiocytidine (s(2)C32). The sulfur atoms are provided by the cysteine/cysteine desulfurase (IscS) system. The protein is tRNA-cytidine(32) 2-sulfurtransferase of Acaryochloris marina (strain MBIC 11017).